We begin with the raw amino-acid sequence, 421 residues long: Probable pectate lyase C (421 aa).

An N-terminal signal peptide occupies residues Met1–Ala19. N-linked (GlcNAc...) asparagine glycans are attached at residues Asn164 and Asn201. Arg204 is a catalytic residue. One can recognise an EF-hand domain in the interval Asn257–Met292. Ca(2+) is bound by residues Asp270, Asp272, Asp274, Thr276, and Glu281. The disordered stretch occupies residues Asp353 to Asp376. A compositionally biased stretch (acidic residues) spans Thr367–Asp376.

It belongs to the polysaccharide lyase 1 family. Requires Ca(2+) as cofactor.

Its subcellular location is the secreted. It carries out the reaction Eliminative cleavage of (1-&gt;4)-alpha-D-galacturonan to give oligosaccharides with 4-deoxy-alpha-D-galact-4-enuronosyl groups at their non-reducing ends.. Functionally, pectinolytic enzyme consist of four classes of enzymes: pectin lyase, polygalacturonase, pectin methylesterase and rhamnogalacturonase. Among pectinolytic enzymes, pectin lyase is the most important in depolymerization of pectin, since it cleaves internal glycosidic bonds of highly methylated pectins. Favors pectate, the anion, over pectin, the methyl ester. This chain is Probable pectate lyase C (plyC), found in Emericella nidulans (strain FGSC A4 / ATCC 38163 / CBS 112.46 / NRRL 194 / M139) (Aspergillus nidulans).